The primary structure comprises 275 residues: uncharacterized protein (275 aa).

6 helical membrane-spanning segments follow: residues 25–45 (LGYF…FMTA), 70–90 (LLFF…LSAI), 107–127 (IGNF…LRFV), 149–169 (FGQW…IVQF), 203–223 (IARA…AMTA), and 247–267 (ILSI…MKGI).

The protein localises to the cell membrane. This is an uncharacterized protein from Bacillus subtilis (strain 168).